The chain runs to 360 residues: Terpene synthase 5 (360 aa).

Positions 87–92 (DDFLER) match the DDxx(x)D/E motif motif. The NDxxSxxxD/E motif signature appears at 237-245 (NDCVSYAKE).

Belongs to the terpene synthase family.

Functionally, terpene synthase that converts its substrate farnesyl diphosphate (FPP) into 2 yet unidentified sesquiterpenes. In Dictyostelium purpureum (Slime mold), this protein is Terpene synthase 5.